The primary structure comprises 316 residues: 4-diphosphocytidyl-2-C-methyl-D-erythritol kinase (316 aa).

Residue K11 is part of the active site. An ATP-binding site is contributed by 99–109 (PVAAGLAGGST). The active site involves D141.

This sequence belongs to the GHMP kinase family. IspE subfamily.

The enzyme catalyses 4-CDP-2-C-methyl-D-erythritol + ATP = 4-CDP-2-C-methyl-D-erythritol 2-phosphate + ADP + H(+). The protein operates within isoprenoid biosynthesis; isopentenyl diphosphate biosynthesis via DXP pathway; isopentenyl diphosphate from 1-deoxy-D-xylulose 5-phosphate: step 3/6. In terms of biological role, catalyzes the phosphorylation of the position 2 hydroxy group of 4-diphosphocytidyl-2C-methyl-D-erythritol. This is 4-diphosphocytidyl-2-C-methyl-D-erythritol kinase from Gloeothece citriformis (strain PCC 7424) (Cyanothece sp. (strain PCC 7424)).